A 183-amino-acid chain; its full sequence is Probable RNA 2'-phosphotransferase (183 aa).

This sequence belongs to the KptA/TPT1 family.

Removes the 2'-phosphate from RNA via an intermediate in which the phosphate is ADP-ribosylated by NAD followed by a presumed transesterification to release the RNA and generate ADP-ribose 1''-2''-cyclic phosphate (APPR&gt;P). May function as an ADP-ribosylase. This chain is Probable RNA 2'-phosphotransferase, found in Pyrococcus furiosus (strain ATCC 43587 / DSM 3638 / JCM 8422 / Vc1).